Here is a 32-residue protein sequence, read N- to C-terminus: Apolipophorin-3 (32 aa).

Residues 1-32 form a disordered region; sequence DAPSTTPPQDXEKKAAEFQKTFTEQXNQLANK. Positions 20–32 are enriched in polar residues; the sequence is KTFTEQXNQLANK.

This sequence belongs to the insect apolipophorin-3 family. Equilibrium between a soluble monomer and a bound lipoprotein form. Apolipophorin-3 associates with lipophorin during lipid loading until each particle contains 9 or 14 molecules of apolipophorin-3. Hemolymph.

It is found in the secreted. Assists in the loading of diacylglycerol, generated from triacylglycerol stores in the fat body through the action of adipokinetic hormone, into lipophorin, the hemolymph lipoprotein. It increases the lipid carrying capacity of lipophorin by covering the expanding hydrophobic surface resulting from diacylglycerol uptake. It thus plays a critical role in the transport of lipids during flight in several species of insects. The sequence is that of Apolipophorin-3 from Diatraea grandiosella (Southwestern corn borer).